The primary structure comprises 454 residues: tRNA modification GTPase MnmE (454 aa).

Residues Arg23, Glu80, and Lys120 each contribute to the (6S)-5-formyl-5,6,7,8-tetrahydrofolate site. The TrmE-type G domain maps to 216–377 (GMKVVIAGRP…LRNHLKQSMG (162 aa)). Position 226 (Asn226) interacts with K(+). GTP is bound by residues 226-231 (NAGKSS), 245-251 (TDIAGTT), 270-273 (DTAG), 335-338 (NKAD), and 358-360 (SAR). Ser230 serves as a coordination point for Mg(2+). K(+) is bound by residues Thr245, Ile247, and Thr250. Position 251 (Thr251) interacts with Mg(2+). Lys454 serves as a coordination point for (6S)-5-formyl-5,6,7,8-tetrahydrofolate.

Belongs to the TRAFAC class TrmE-Era-EngA-EngB-Septin-like GTPase superfamily. TrmE GTPase family. Homodimer. Heterotetramer of two MnmE and two MnmG subunits. K(+) serves as cofactor.

It localises to the cytoplasm. Functionally, exhibits a very high intrinsic GTPase hydrolysis rate. Involved in the addition of a carboxymethylaminomethyl (cmnm) group at the wobble position (U34) of certain tRNAs, forming tRNA-cmnm(5)s(2)U34. This is tRNA modification GTPase MnmE from Escherichia coli (strain 55989 / EAEC).